The chain runs to 88 residues: Large ribosomal subunit protein bL27 (88 aa).

The segment at 1–22 is disordered; the sequence is MAHKKGASSSRNGRDSNAQRLG. Residues 7 to 19 show a composition bias toward polar residues; sequence ASSSRNGRDSNAQ.

Belongs to the bacterial ribosomal protein bL27 family.

This is Large ribosomal subunit protein bL27 from Mycolicibacterium gilvum (strain PYR-GCK) (Mycobacterium gilvum (strain PYR-GCK)).